Consider the following 402-residue polypeptide: CCA-adding enzyme (402 aa).

The ATP site is built by Gly32 and Arg35. CTP is bound by residues Gly32 and Arg35. Mg(2+)-binding residues include Asp45 and Asp47. Residues Arg116, Asp159, Arg162, Arg165, and Arg168 each coordinate ATP. CTP contacts are provided by Arg116, Asp159, Arg162, Arg165, and Arg168.

Belongs to the tRNA nucleotidyltransferase/poly(A) polymerase family. Bacterial CCA-adding enzyme type 3 subfamily. Homodimer. Requires Mg(2+) as cofactor.

The catalysed reaction is a tRNA precursor + 2 CTP + ATP = a tRNA with a 3' CCA end + 3 diphosphate. It catalyses the reaction a tRNA with a 3' CCA end + 2 CTP + ATP = a tRNA with a 3' CCACCA end + 3 diphosphate. Catalyzes the addition and repair of the essential 3'-terminal CCA sequence in tRNAs without using a nucleic acid template. Adds these three nucleotides in the order of C, C, and A to the tRNA nucleotide-73, using CTP and ATP as substrates and producing inorganic pyrophosphate. tRNA 3'-terminal CCA addition is required both for tRNA processing and repair. Also involved in tRNA surveillance by mediating tandem CCA addition to generate a CCACCA at the 3' terminus of unstable tRNAs. While stable tRNAs receive only 3'-terminal CCA, unstable tRNAs are marked with CCACCA and rapidly degraded. This chain is CCA-adding enzyme, found in Streptococcus thermophilus (strain CNRZ 1066).